We begin with the raw amino-acid sequence, 437 residues long: Bile acid CoA-transferase BaiK (437 aa).

The Nucleophile role is filled by Asp171.

The protein belongs to the CoA-transferase III family.

It carries out the reaction deoxycholoyl-CoA + cholate = choloyl-CoA + deoxycholate. The enzyme catalyses allodeoxycholoyl-CoA + cholate = allodeoxycholate + choloyl-CoA. The catalysed reaction is allocholate + deoxycholoyl-CoA = allocholoyl-CoA + deoxycholate. It catalyses the reaction allocholate + allodeoxycholoyl-CoA = allocholoyl-CoA + allodeoxycholate. It carries out the reaction ursodeoxycholate + deoxycholoyl-CoA = ursodeoxycholoyl-CoA + deoxycholate. The enzyme catalyses allodeoxycholoyl-CoA + ursodeoxycholate = ursodeoxycholoyl-CoA + allodeoxycholate. It functions in the pathway lipid metabolism; bile acid biosynthesis. Functionally, functions in the bile acid 7alpha-dehydroxylation pathway, which forms secondary bile acids via the 7alpha-dehydroxylation of primary bile acids, and is carried out by intestinal anaerobic bacteria. Acts as a bile acid CoA transferase with broad bile acid substrate specificity. Catalyzes the transfer of the CoA moiety of secondary bile acid-CoA compounds to primary bile acids. Can use deoxycholoyl-CoA and allodeoxycholoyl-CoA as bile acid CoA donors and cholate, allocholate and ursodeoxycholate as bile acid CoA acceptors. Shows no activity when lithocholoyl-CoA is used as the CoA donor. This is Bile acid CoA-transferase BaiK from Clostridium scindens (strain JCM 10418 / VPI 12708).